The following is a 194-amino-acid chain: Thymidylate kinase (194 aa).

G7–S14 lines the ATP pocket.

The protein belongs to the thymidylate kinase family.

The enzyme catalyses dTMP + ATP = dTDP + ADP. Phosphorylation of dTMP to form dTDP in both de novo and salvage pathways of dTTP synthesis. The polypeptide is Thymidylate kinase (Campylobacter curvus (strain 525.92)).